The sequence spans 379 residues: Queuine tRNA-ribosyltransferase (379 aa).

Catalysis depends on aspartate 94, which acts as the Proton acceptor. Substrate contacts are provided by residues 94-98 (DSGGF), aspartate 148, glutamine 191, and glycine 218. The tract at residues 249 to 255 (GVGSPDA) is RNA binding. Aspartate 268 (nucleophile) is an active-site residue. The RNA binding; important for wobble base 34 recognition stretch occupies residues 273–277 (TRIAR). Positions 306, 308, 311, and 337 each coordinate Zn(2+).

The protein belongs to the queuine tRNA-ribosyltransferase family. Homodimer. Within each dimer, one monomer is responsible for RNA recognition and catalysis, while the other monomer binds to the replacement base PreQ1. It depends on Zn(2+) as a cofactor.

The enzyme catalyses 7-aminomethyl-7-carbaguanine + guanosine(34) in tRNA = 7-aminomethyl-7-carbaguanosine(34) in tRNA + guanine. It participates in tRNA modification; tRNA-queuosine biosynthesis. Its function is as follows. Catalyzes the base-exchange of a guanine (G) residue with the queuine precursor 7-aminomethyl-7-deazaguanine (PreQ1) at position 34 (anticodon wobble position) in tRNAs with GU(N) anticodons (tRNA-Asp, -Asn, -His and -Tyr). Catalysis occurs through a double-displacement mechanism. The nucleophile active site attacks the C1' of nucleotide 34 to detach the guanine base from the RNA, forming a covalent enzyme-RNA intermediate. The proton acceptor active site deprotonates the incoming PreQ1, allowing a nucleophilic attack on the C1' of the ribose to form the product. After dissociation, two additional enzymatic reactions on the tRNA convert PreQ1 to queuine (Q), resulting in the hypermodified nucleoside queuosine (7-(((4,5-cis-dihydroxy-2-cyclopenten-1-yl)amino)methyl)-7-deazaguanosine). The polypeptide is Queuine tRNA-ribosyltransferase (Staphylococcus haemolyticus (strain JCSC1435)).